The sequence spans 170 residues: Small ribosomal subunit protein uS5 (170 aa).

Residues 11-74 (ILEKLVHINR…ETARRVLIHV (64 aa)) form the S5 DRBM domain.

It belongs to the universal ribosomal protein uS5 family. In terms of assembly, part of the 30S ribosomal subunit. Contacts proteins S4 and S8.

Its function is as follows. With S4 and S12 plays an important role in translational accuracy. Functionally, located at the back of the 30S subunit body where it stabilizes the conformation of the head with respect to the body. This chain is Small ribosomal subunit protein uS5, found in Pelagibacter ubique (strain HTCC1062).